The primary structure comprises 474 residues: Glutamate--tRNA ligase 1 (474 aa).

The 'HIGH' region motif lies at 11 to 21; that stretch reads PSPTGFLHIGG. Residues 113 to 133 are compositionally biased toward basic and acidic residues; the sequence is TARAEGRAPRYDGRWRDRDPS. Positions 113–136 are disordered; that stretch reads TARAEGRAPRYDGRWRDRDPSEAP. The 'KMSKS' region motif lies at 240–244; sequence KLSKR. ATP is bound at residue lysine 243.

Belongs to the class-I aminoacyl-tRNA synthetase family. Glutamate--tRNA ligase type 1 subfamily. In terms of assembly, monomer.

The protein localises to the cytoplasm. It catalyses the reaction tRNA(Glu) + L-glutamate + ATP = L-glutamyl-tRNA(Glu) + AMP + diphosphate. Catalyzes the attachment of glutamate to tRNA(Glu) in a two-step reaction: glutamate is first activated by ATP to form Glu-AMP and then transferred to the acceptor end of tRNA(Glu). The chain is Glutamate--tRNA ligase 1 from Methylorubrum extorquens (strain PA1) (Methylobacterium extorquens).